Consider the following 554-residue polypeptide: Phosphomethylpyrimidine synthase (554 aa).

Substrate is bound by residues asparagine 188, methionine 217, tyrosine 246, histidine 282, 302–304 (SRG), 343–346 (DGLR), and glutamate 382. Histidine 386 contacts Zn(2+). Substrate is bound at residue tyrosine 409. Histidine 450 is a Zn(2+) binding site. Residues cysteine 530, cysteine 533, and cysteine 538 each contribute to the [4Fe-4S] cluster site.

The protein belongs to the ThiC family. Homodimer. It depends on [4Fe-4S] cluster as a cofactor.

It catalyses the reaction 5-amino-1-(5-phospho-beta-D-ribosyl)imidazole + S-adenosyl-L-methionine = 4-amino-2-methyl-5-(phosphooxymethyl)pyrimidine + CO + 5'-deoxyadenosine + formate + L-methionine + 3 H(+). Its pathway is cofactor biosynthesis; thiamine diphosphate biosynthesis. Catalyzes the synthesis of the hydroxymethylpyrimidine phosphate (HMP-P) moiety of thiamine from aminoimidazole ribotide (AIR) in a radical S-adenosyl-L-methionine (SAM)-dependent reaction. The protein is Phosphomethylpyrimidine synthase of Coxiella burnetii (strain CbuK_Q154) (Coxiella burnetii (strain Q154)).